Here is a 597-residue protein sequence, read N- to C-terminus: Elongation factor 4 (597 aa).

The 183-residue stretch at 2-184 (KNIRNFSIIA…SIVEHLPAPE (183 aa)) folds into the tr-type G domain. GTP contacts are provided by residues 14 to 19 (DHGKST) and 131 to 134 (NKID).

This sequence belongs to the TRAFAC class translation factor GTPase superfamily. Classic translation factor GTPase family. LepA subfamily.

It localises to the cell inner membrane. The enzyme catalyses GTP + H2O = GDP + phosphate + H(+). In terms of biological role, required for accurate and efficient protein synthesis under certain stress conditions. May act as a fidelity factor of the translation reaction, by catalyzing a one-codon backward translocation of tRNAs on improperly translocated ribosomes. Back-translocation proceeds from a post-translocation (POST) complex to a pre-translocation (PRE) complex, thus giving elongation factor G a second chance to translocate the tRNAs correctly. Binds to ribosomes in a GTP-dependent manner. The chain is Elongation factor 4 from Desulfotalea psychrophila (strain LSv54 / DSM 12343).